The following is a 389-amino-acid chain: Elongation factor Tu-3 (389 aa).

In terms of domain architecture, tr-type G spans 10-203 (KPHLNIGTMG…AVDTYVPMPE (194 aa)). The G1 stretch occupies residues 19–26 (GHVDHGKT). 19-26 (GHVDHGKT) is a binding site for GTP. Residue Thr26 coordinates Mg(2+). Positions 60–64 (GITIN) are G2. A G3 region spans residues 81-84 (DMPG). GTP is bound by residues 81-85 (DMPGH) and 136-139 (NKAD). A G4 region spans residues 136-139 (NKAD). A G5 region spans residues 173–175 (SGL).

It belongs to the TRAFAC class translation factor GTPase superfamily. Classic translation factor GTPase family. EF-Tu/EF-1A subfamily. In terms of assembly, monomer.

It localises to the cytoplasm. The catalysed reaction is GTP + H2O = GDP + phosphate + H(+). In terms of biological role, GTP hydrolase that promotes the GTP-dependent binding of aminoacyl-tRNA to the A-site of ribosomes during protein biosynthesis. The protein is Elongation factor Tu-3 of Streptomyces ramocissimus.